Here is a 282-residue protein sequence, read N- to C-terminus: Ribosomal RNA small subunit methyltransferase A (282 aa).

S-adenosyl-L-methionine contacts are provided by histidine 11, leucine 13, glycine 44, glutamate 65, aspartate 90, and asparagine 106.

This sequence belongs to the class I-like SAM-binding methyltransferase superfamily. rRNA adenine N(6)-methyltransferase family. RsmA subfamily.

Its subcellular location is the cytoplasm. It carries out the reaction adenosine(1518)/adenosine(1519) in 16S rRNA + 4 S-adenosyl-L-methionine = N(6)-dimethyladenosine(1518)/N(6)-dimethyladenosine(1519) in 16S rRNA + 4 S-adenosyl-L-homocysteine + 4 H(+). Functionally, specifically dimethylates two adjacent adenosines (A1518 and A1519) in the loop of a conserved hairpin near the 3'-end of 16S rRNA in the 30S particle. May play a critical role in biogenesis of 30S subunits. The protein is Ribosomal RNA small subunit methyltransferase A of Synechococcus sp. (strain JA-2-3B'a(2-13)) (Cyanobacteria bacterium Yellowstone B-Prime).